The primary structure comprises 403 residues: Glucose/galactose-binding lipoprotein (403 aa).

The N-terminal stretch at 1–25 (MKENSCTACSRRLALFVGAAVLVVG) is a signal peptide. Residue C26 is the site of N-palmitoyl cysteine attachment. A lipid anchor (S-diacylglycerol cysteine) is attached at C26.

Belongs to the bacterial solute-binding protein 2 family.

It localises to the cell membrane. May be involved in the transport of sugars. May have a role in chemotaxis. This chain is Glucose/galactose-binding lipoprotein (mglB), found in Treponema pallidum (strain Nichols).